A 155-amino-acid polypeptide reads, in one-letter code: Ribonuclease H (155 aa).

One can recognise an RNase H type-1 domain in the interval 4–145 (TEPTVYAYTD…ADRLANRGID (142 aa)). Asp13, Glu51, Asp73, and Asp137 together coordinate Mg(2+).

The protein belongs to the RNase H family. As to quaternary structure, monomer. The cofactor is Mg(2+).

It localises to the cytoplasm. The enzyme catalyses Endonucleolytic cleavage to 5'-phosphomonoester.. In terms of biological role, endonuclease that specifically degrades the RNA of RNA-DNA hybrids. This is Ribonuclease H from Methylococcus capsulatus (strain ATCC 33009 / NCIMB 11132 / Bath).